We begin with the raw amino-acid sequence, 457 residues long: Tubulin alpha chain (457 aa).

Gln-12, Glu-77, Ser-146, Gly-150, Thr-151, Thr-186, Asn-213, and Asn-235 together coordinate GTP. Position 77 (Glu-77) interacts with Mg(2+).

It belongs to the tubulin family. Dimer of alpha and beta chains. A typical microtubule is a hollow water-filled tube with an outer diameter of 25 nm and an inner diameter of 15 nM. Alpha-beta heterodimers associate head-to-tail to form protofilaments running lengthwise along the microtubule wall with the beta-tubulin subunit facing the microtubule plus end conferring a structural polarity. Microtubules usually have 13 protofilaments but different protofilament numbers can be found in some organisms and specialized cells. Mg(2+) is required as a cofactor. In terms of processing, undergoes a tyrosination/detyrosination cycle, the cyclic removal and re-addition of a C-terminal tyrosine residue by the enzymes tubulin tyrosine carboxypeptidase (TTCP) and tubulin tyrosine ligase (TTL), respectively.

It localises to the cytoplasm. The protein localises to the cytoskeleton. It carries out the reaction GTP + H2O = GDP + phosphate + H(+). Its function is as follows. Tubulin is the major constituent of microtubules, a cylinder consisting of laterally associated linear protofilaments composed of alpha- and beta-tubulin heterodimers. Microtubules grow by the addition of GTP-tubulin dimers to the microtubule end, where a stabilizing cap forms. Below the cap, tubulin dimers are in GDP-bound state, owing to GTPase activity of alpha-tubulin. The polypeptide is Tubulin alpha chain (tubA) (Dictyostelium discoideum (Social amoeba)).